The sequence spans 118 residues: Large ribosomal subunit protein bL20 (118 aa).

Belongs to the bacterial ribosomal protein bL20 family.

In terms of biological role, binds directly to 23S ribosomal RNA and is necessary for the in vitro assembly process of the 50S ribosomal subunit. It is not involved in the protein synthesizing functions of that subunit. This Proteus mirabilis (strain HI4320) protein is Large ribosomal subunit protein bL20.